We begin with the raw amino-acid sequence, 397 residues long: CCA-adding enzyme (397 aa).

ATP contacts are provided by Gly-27 and Arg-30. CTP contacts are provided by Gly-27 and Arg-30. Mg(2+) is bound by residues Asp-40 and Asp-42. 5 residues coordinate ATP: Arg-111, Asp-154, Arg-157, Arg-160, and Arg-163. Residues Arg-111, Asp-154, Arg-157, Arg-160, and Arg-163 each coordinate CTP.

The protein belongs to the tRNA nucleotidyltransferase/poly(A) polymerase family. Bacterial CCA-adding enzyme type 3 subfamily. In terms of assembly, homodimer. The cofactor is Mg(2+).

The catalysed reaction is a tRNA precursor + 2 CTP + ATP = a tRNA with a 3' CCA end + 3 diphosphate. It carries out the reaction a tRNA with a 3' CCA end + 2 CTP + ATP = a tRNA with a 3' CCACCA end + 3 diphosphate. Functionally, catalyzes the addition and repair of the essential 3'-terminal CCA sequence in tRNAs without using a nucleic acid template. Adds these three nucleotides in the order of C, C, and A to the tRNA nucleotide-73, using CTP and ATP as substrates and producing inorganic pyrophosphate. tRNA 3'-terminal CCA addition is required both for tRNA processing and repair. Also involved in tRNA surveillance by mediating tandem CCA addition to generate a CCACCA at the 3' terminus of unstable tRNAs. While stable tRNAs receive only 3'-terminal CCA, unstable tRNAs are marked with CCACCA and rapidly degraded. This chain is CCA-adding enzyme, found in Anoxybacillus flavithermus (strain DSM 21510 / WK1).